The primary structure comprises 209 residues: Uracil phosphoribosyltransferase (209 aa).

5-phospho-alpha-D-ribose 1-diphosphate contacts are provided by residues Arg79, Arg104, and 131-139 (DPMLATGGS). Uracil is bound by residues Ile194 and 199 to 201 (GDA). Asp200 is a binding site for 5-phospho-alpha-D-ribose 1-diphosphate.

The protein belongs to the UPRTase family. The cofactor is Mg(2+).

It catalyses the reaction UMP + diphosphate = 5-phospho-alpha-D-ribose 1-diphosphate + uracil. It functions in the pathway pyrimidine metabolism; UMP biosynthesis via salvage pathway; UMP from uracil: step 1/1. Allosterically activated by GTP. In terms of biological role, catalyzes the conversion of uracil and 5-phospho-alpha-D-ribose 1-diphosphate (PRPP) to UMP and diphosphate. The protein is Uracil phosphoribosyltransferase of Latilactobacillus sakei (Lactobacillus sakei).